We begin with the raw amino-acid sequence, 1232 residues long: Pyruvate:ferredoxin oxidoreductase (1232 aa).

A pyruvate-binding site is contributed by Thr31. Glu64 lines the thiamine diphosphate pocket. Arg114 is a pyruvate binding site. Residues 427-431 (ADGTV), Lys459, Asn560, and Asn602 contribute to the CoA site. 4Fe-4S ferredoxin-type domains are found at residues 680-709 (NVPQ…PVLA) and 736-767 (FRIQ…MQPL). Positions 689, 692, 695, 699, 745, 748, 751, 755, 812, and 815 each coordinate [4Fe-4S] cluster. Thiamine diphosphate is bound by residues Glu817, Cys840, and 962–965 (GDGW). Position 840 (Cys840) interacts with [4Fe-4S] cluster. Asp963 lines the Mg(2+) pocket. The Ca(2+) site is built by Asp983 and Asn985. Mg(2+)-binding residues include Thr991 and Val993. 991–996 (TEVYSN) contacts thiamine diphosphate. Residues Ala1056, Phe1059, Gly1061, and Ser1063 each contribute to the Ca(2+) site. Cys1071 provides a ligand contact to [4Fe-4S] cluster. The cysteines at positions 1195 and 1212 are disulfide-linked. The interval 1197–1232 (RDDTPMMARPDSGEACDQNRAGTSEQQGDLSKRTKK) is disordered. Residues 1216-1225 (RAGTSEQQGD) show a composition bias toward polar residues.

This sequence belongs to the pyruvate:ferredoxin/flavodoxin oxidoreductase family. As to quaternary structure, homodimer. It depends on [4Fe-4S] cluster as a cofactor. Requires thiamine diphosphate as cofactor. Mg(2+) is required as a cofactor.

The protein localises to the cytoplasm. It carries out the reaction 2 oxidized [2Fe-2S]-[ferredoxin] + pyruvate + CoA = 2 reduced [2Fe-2S]-[ferredoxin] + acetyl-CoA + CO2 + H(+). Catalyzes the ferredoxin-dependent oxidative decarboxylation of pyruvate. Required for the transfer of electrons from pyruvate to ferredoxin. Ferredoxin I and ferredoxin II, which are single 4Fe-4S cluster ferredoxins are the most effective electron carriers of POR. In Desulfocurvibacter africanus (Desulfovibrio africanus), this protein is Pyruvate:ferredoxin oxidoreductase.